We begin with the raw amino-acid sequence, 411 residues long: S-inosyl-L-homocysteine hydrolase (411 aa).

D121 and E146 together coordinate substrate. 147–149 (TTT) lines the NAD(+) pocket. The substrate site is built by K176 and D180. Residues N181, 210–215 (GYGWCG), E233, N268, 289–291 (SGH), and N335 each bind NAD(+).

The protein belongs to the adenosylhomocysteinase family. NAD(+) is required as a cofactor.

It localises to the cytoplasm. The enzyme catalyses S-inosyl-L-homocysteine + H2O = L-homocysteine + inosine. It participates in amino-acid biosynthesis; S-adenosyl-L-methionine biosynthesis. In terms of biological role, catalyzes the hydrolysis of S-inosyl-L-homocysteine (SIH) to L-homocysteine (Hcy) and inosine. Likely functions in a S-adenosyl-L-methionine (SAM) recycling pathway from S-adenosyl-L-homocysteine (SAH) produced from SAM-dependent methylation reactions. Can also catalyze the reverse reaction in vitro, i.e. the synthesis of SIH from Hcy and inosine. This chain is S-inosyl-L-homocysteine hydrolase, found in Methanosarcina mazei (strain ATCC BAA-159 / DSM 3647 / Goe1 / Go1 / JCM 11833 / OCM 88) (Methanosarcina frisia).